Reading from the N-terminus, the 107-residue chain is MPSGNVLVPEEMIKKAKQLSSFLPAEVKQQIKTIENMKRSFSLPAKINGDYVLIVGIVTDSPIRSTIAFDLDDLKIIMEVVLKALDRLGVNRNEFLAQFIQEGESSA.

This is an uncharacterized protein from Acidianus bottle-shaped virus (isolate Italy/Pozzuoli) (ABV).